We begin with the raw amino-acid sequence, 351 residues long: Ubiquinol oxidase 4, chloroplastic/chromoplastic (351 aa).

The transit peptide at 1 to 56 (MAAISGISSGTLTISRPLVTLRRSRAAVSYSSSHRLLHHLPLSSRRLLLRNNHRVQ) directs the protein to the chloroplast and chromoplast. The segment at 71–91 (ESFKAETSTGTEPLEEPNMSS) is disordered. Residues 132 to 152 (FFVLETIARVPYFAFMSVLHM) traverse the membrane as a helical segment. Fe cation-binding residues include Glu-136, Glu-175, and His-178. The chain crosses the membrane as a helical span at residues 195–215 (FLAQHIATFYYFMTVFLYILS). Glu-227, Glu-296, and His-299 together coordinate Fe cation.

It belongs to the alternative oxidase family. It depends on Fe cation as a cofactor. As to expression, ubiquitous.

It localises to the plastid. The protein localises to the chloroplast thylakoid membrane. Its subcellular location is the chromoplast membrane. It catalyses the reaction 2 a ubiquinol + O2 = 2 a ubiquinone + 2 H2O. Acts early in chloroplast biogenesis as a component of a redox chain responsible for phytoene desaturation. Prevents the generation of toxic oxygen radicals and photooxidation of the nascent photosynthetic apparatus. Involved in the differentiation of multiple plastid types, including chloroplasts, amyloplasts, and etioplasts. Might participate in the chloroplast respiratory chain. The sequence is that of Ubiquinol oxidase 4, chloroplastic/chromoplastic (AOX4) from Arabidopsis thaliana (Mouse-ear cress).